Consider the following 179-residue polypeptide: Large ribosomal subunit protein uL5 (179 aa).

Belongs to the universal ribosomal protein uL5 family. As to quaternary structure, part of the 50S ribosomal subunit; part of the 5S rRNA/L5/L18/L25 subcomplex. Contacts the 5S rRNA and the P site tRNA. Forms a bridge to the 30S subunit in the 70S ribosome.

In terms of biological role, this is one of the proteins that bind and probably mediate the attachment of the 5S RNA into the large ribosomal subunit, where it forms part of the central protuberance. In the 70S ribosome it contacts protein S13 of the 30S subunit (bridge B1b), connecting the 2 subunits; this bridge is implicated in subunit movement. Contacts the P site tRNA; the 5S rRNA and some of its associated proteins might help stabilize positioning of ribosome-bound tRNAs. The protein is Large ribosomal subunit protein uL5 of Rickettsia felis (strain ATCC VR-1525 / URRWXCal2) (Rickettsia azadi).